Reading from the N-terminus, the 232-residue chain is Lipoprotein-releasing system ATP-binding protein LolD (232 aa).

Positions 6 to 231 (ISCENLNKVY…KLTIKESQHV (226 aa)) constitute an ABC transporter domain. 42-49 (GSSGSGKS) is a binding site for ATP.

This sequence belongs to the ABC transporter superfamily. Lipoprotein translocase (TC 3.A.1.125) family. As to quaternary structure, the complex is composed of two ATP-binding proteins (LolD) and two transmembrane proteins (LolC and LolE).

The protein resides in the cell inner membrane. Part of the ABC transporter complex LolCDE involved in the translocation of mature outer membrane-directed lipoproteins, from the inner membrane to the periplasmic chaperone, LolA. Responsible for the formation of the LolA-lipoprotein complex in an ATP-dependent manner. In Pseudoalteromonas translucida (strain TAC 125), this protein is Lipoprotein-releasing system ATP-binding protein LolD.